We begin with the raw amino-acid sequence, 938 residues long: Isoleucine--tRNA ligase (938 aa).

Residues 65 to 75 (PYANGSIHIGH) carry the 'HIGH' region motif. Glu-568 provides a ligand contact to L-isoleucyl-5'-AMP. Residues 609–613 (KMSKS) carry the 'KMSKS' region motif. Lys-612 is an ATP binding site. Residues Cys-905, Cys-908, Cys-921, and Cys-924 each contribute to the Zn(2+) site.

This sequence belongs to the class-I aminoacyl-tRNA synthetase family. IleS type 1 subfamily. Monomer. Zn(2+) is required as a cofactor.

The protein localises to the cytoplasm. The enzyme catalyses tRNA(Ile) + L-isoleucine + ATP = L-isoleucyl-tRNA(Ile) + AMP + diphosphate. Its function is as follows. Catalyzes the attachment of isoleucine to tRNA(Ile). As IleRS can inadvertently accommodate and process structurally similar amino acids such as valine, to avoid such errors it has two additional distinct tRNA(Ile)-dependent editing activities. One activity is designated as 'pretransfer' editing and involves the hydrolysis of activated Val-AMP. The other activity is designated 'posttransfer' editing and involves deacylation of mischarged Val-tRNA(Ile). The sequence is that of Isoleucine--tRNA ligase from Mannheimia succiniciproducens (strain KCTC 0769BP / MBEL55E).